Reading from the N-terminus, the 860-residue chain is Photoactivated adenylate cyclase subunit beta (860 aa).

The BLUF 1 domain maps to 56 to 149; that stretch reads LRRLMYLSKS…GRMYGDWHMK (94 aa). In terms of domain architecture, Guanylate cyclase 1 spans 205–333; that stretch reads VVTFIYLVEF…DCINTTSRIA (129 aa). A disordered region spans residues 420-443; that stretch reads RPPIFDDTPKGKPRPRTPGYGGRQ. The BLUF 2 domain maps to 471–563; it reads LTTLTYISQA…RAYPAEWTLT (93 aa). One can recognise a Guanylate cyclase 2 domain in the interval 619–748; it reads VMLATDICSF…AVSARVMEVE (130 aa). Positions 819–860 are disordered; sequence KPLALEPEEAKQDYRVSPGRMRHGDSGRRSNSAQGKRSTQVR. The span at 847–860 shows a compositional bias: polar residues; it reads RSNSAQGKRSTQVR.

This sequence belongs to the adenylyl cyclase class-4/guanylyl cyclase family. As to quaternary structure, heterotetramer of two alpha and two beta subunits. It depends on FAD as a cofactor.

The protein resides in the cell projection. The protein localises to the cilium. It localises to the flagellum. It catalyses the reaction ATP = 3',5'-cyclic AMP + diphosphate. Its function is as follows. Acts as a photoreceptor for the step-up photophobic response. The sequence is that of Photoactivated adenylate cyclase subunit beta from Euglena longa (Euglenophycean alga).